Here is a 329-residue protein sequence, read N- to C-terminus: MQNSIMDFLRPRLVDIEQISATHTKVTLEPLERGFGHTLGNALRRILLSSMPGCAVTEVEIDGVLHEYSTKEGVQEDVLEILLNLKALAVKVYGKDETLLTLHKSGIGSITAADIIHDGDVEIIKPQHVICHLTDENASIKMRIKVQRGRGYIPASSRVHLEEDSRPIGCLLVDACYSPINRISYNVEAARVEQRTDLDKLVIEMETNGTIDPEEAIRRAATILAEQLEAFVDLRDIREPEFKEEKPEFEPILLRPVDDLELTVRSANCLKAEAIHYIGDLVQRTEVELLKTPNLGKKSLTEIKDVLASRSLSLGMRLENWPPSSILDE.

The alpha N-terminal domain (alpha-NTD) stretch occupies residues 1–235; that stretch reads MQNSIMDFLR…EQLEAFVDLR (235 aa). Residues 249 to 329 form an alpha C-terminal domain (alpha-CTD) region; that stretch reads FEPILLRPVD…NWPPSSILDE (81 aa).

This sequence belongs to the RNA polymerase alpha chain family. In terms of assembly, homodimer. The RNAP catalytic core consists of 2 alpha, 1 beta, 1 beta' and 1 omega subunit. When a sigma factor is associated with the core the holoenzyme is formed, which can initiate transcription.

It carries out the reaction RNA(n) + a ribonucleoside 5'-triphosphate = RNA(n+1) + diphosphate. Its function is as follows. DNA-dependent RNA polymerase catalyzes the transcription of DNA into RNA using the four ribonucleoside triphosphates as substrates. In Buchnera aphidicola subsp. Acyrthosiphon pisum (strain APS) (Acyrthosiphon pisum symbiotic bacterium), this protein is DNA-directed RNA polymerase subunit alpha.